The following is a 276-amino-acid chain: Microtubule-associated protein RP/EB family member 1A (276 aa).

One can recognise a Calponin-homology (CH) domain in the interval 13–115 (FVGRNEILTW…FLQWLKRFCD (103 aa)). The interval 124–172 (ENYNPVERRSRNGKERSVKGSNKIPKSLQTNNNHPPPNSSSVGLSKASG) is disordered. A compositionally biased stretch (basic and acidic residues) spans 129–141 (VERRSRNGKERSV). Residues 162 to 172 (SSSVGLSKASG) are compositionally biased toward low complexity. Positions 173–243 (PKSAKAAEVQ…LYATDANESA (71 aa)) constitute an EB1 C-terminal domain. The tract at residues 252-276 (NQSLGVEDDEAEGNGEQLEEEKTQA) is disordered. Residues 257–270 (VEDDEAEGNGEQLE) show a composition bias toward acidic residues.

It belongs to the MAPRE family. As to quaternary structure, homodimer and heterodimer with EB1B. Interacts with tobamovirus movement protein. In terms of tissue distribution, highly expressed in guard cells of leaf stomata, pollen grains and pollen tubes. Expressed in young roots.

Its subcellular location is the cytoplasm. It localises to the cytoskeleton. The protein localises to the spindle pole. The protein resides in the phragmoplast. Functionally, binds to the plus end of microtubules and regulates the dynamics of the microtubule cytoskeleton. May be involved in anchoring microtubules to their nucleation sites and/or functioning as a reservoir for distribution to the growing end. In plants, microtubule minus ends are not necessarily severed from the nucleation site and transported to the plus end of a microtubule as part of the recycling process. May play a role in endomembrane organization during polarized growth of plant cells. Interacts with the tobamovirus movement protein (MP) and may play a role in the association of MP with the microtubule system during infection. The chain is Microtubule-associated protein RP/EB family member 1A (EB1A) from Arabidopsis thaliana (Mouse-ear cress).